A 75-amino-acid polypeptide reads, in one-letter code: Small ribosomal subunit protein bS18 (75 aa).

The protein belongs to the bacterial ribosomal protein bS18 family. In terms of assembly, part of the 30S ribosomal subunit. Forms a tight heterodimer with protein bS6.

Functionally, binds as a heterodimer with protein bS6 to the central domain of the 16S rRNA, where it helps stabilize the platform of the 30S subunit. In Glaesserella parasuis serovar 5 (strain SH0165) (Haemophilus parasuis), this protein is Small ribosomal subunit protein bS18.